The following is a 352-amino-acid chain: N-acetyl-gamma-glutamyl-phosphate reductase (352 aa).

Residue C158 is part of the active site.

The protein belongs to the NAGSA dehydrogenase family. Type 1 subfamily.

The protein localises to the cytoplasm. The catalysed reaction is N-acetyl-L-glutamate 5-semialdehyde + phosphate + NADP(+) = N-acetyl-L-glutamyl 5-phosphate + NADPH + H(+). It participates in amino-acid biosynthesis; L-arginine biosynthesis; N(2)-acetyl-L-ornithine from L-glutamate: step 3/4. Its function is as follows. Catalyzes the NADPH-dependent reduction of N-acetyl-5-glutamyl phosphate to yield N-acetyl-L-glutamate 5-semialdehyde. The protein is N-acetyl-gamma-glutamyl-phosphate reductase of Mycobacterium bovis (strain BCG / Tokyo 172 / ATCC 35737 / TMC 1019).